The primary structure comprises 624 residues: MEIPGSLCKKVKLSNNAQNWGMQRATNVTYQAHHVSRNKRGQVVGTRGGFRGCTVWLTGLSGAGKTTVSMALEEYLVCHGIPCYTLDGDNIRQGLNKNLGFSPEDREENVRRIAEVAKLFADAGLVCITSFISPYTQDRNNARQIHEGASLPFFEVFVDAPLHVCEQRDVKGLYKKARAGEIKGFTGIDSEYEKPEAPELVLKTDSCDVNDCVQQVVELLQERDIVPVDASYEVKELYVPENKLHLAKTDAEALPALKINKVDMQWVQVLAEGWATPLNGFMREREYLQCLHFDCLLDGGVINLSVPIVLTATHEDKERLDGCTAFALVYEGRRVAILRNPEFFEHRKEERCARQWGTTCKNHPYIKMVLEQGDWLIGGDLQVLDRIYWNDGLDQYRLTPTELKQKFKDMNADAVFAFQLRNPVHNGHALLMQDTHKQLLERGYRRPVLLLHPLGGWTKDDDVPLMWRMKQHAAVLEEGILDPETTVVAIFPSPMMYAGPTEVQWHCRARMVAGANFYIVGRDPAGMPHPETGKDLYEPTHGAKVLTMAPGLITLEIVPFRVAAYNKKKKRMDYYDSEHHEDFEFISGTRMRKLAREGQKPPEGFMAPKAWTVLVEYYKSLEKA.

At methionine 1 the chain carries N-acetylmethionine. The tract at residues 1–225 (MEIPGSLCKK…VVELLQERDI (225 aa)) is adenylyl-sulfate kinase. Lysine 12 is subject to N6-acetyllysine. ATP is bound at residue 62–67 (GAGKTT). Residues 89 to 92 (DNIR), phenylalanine 101, 106 to 109 (REEN), 132 to 133 (IS), lysine 171, and 184 to 185 (GF) each bind adenosine 5'-phosphosulfate. ATP-binding positions include cysteine 207, cysteine 212, 419-422 (QLRN), 521-525 (GRDPA), and alanine 563. The interval 234–624 (VKELYVPENK…VEYYKSLEKA (391 aa)) is sulfate adenylyltransferase.

The protein in the N-terminal section; belongs to the APS kinase family. It in the C-terminal section; belongs to the sulfate adenylyltransferase family. In terms of assembly, homodimer. Expressed in the neonatal brain and in cartilage.

It carries out the reaction sulfate + ATP + H(+) = adenosine 5'-phosphosulfate + diphosphate. The enzyme catalyses adenosine 5'-phosphosulfate + ATP = 3'-phosphoadenylyl sulfate + ADP + H(+). The protein operates within sulfur metabolism; sulfate assimilation. Bifunctional enzyme with both ATP sulfurylase and APS kinase activity, which mediates two steps in the sulfate activation pathway. The first step is the transfer of a sulfate group to ATP to yield adenosine 5'-phosphosulfate (APS), and the second step is the transfer of a phosphate group from ATP to APS yielding 3'-phosphoadenylylsulfate (PAPS: activated sulfate donor used by sulfotransferase). In mammals, PAPS is the sole source of sulfate; APS appears to be only an intermediate in the sulfate-activation pathway. Required for normal biosynthesis of sulfated L-selectin ligands in endothelial cells. The polypeptide is Bifunctional 3'-phosphoadenosine 5'-phosphosulfate synthase 1 (Papss1) (Mus musculus (Mouse)).